The primary structure comprises 423 residues: Lysosomal acid phosphatase (423 aa).

A signal peptide spans 1-30; sequence MAGKRSGWSRAALLQLLLGVNLVVMPPTQA. The Lumenal portion of the chain corresponds to 31–380; it reads RSLRFVTLLY…QVASGPADTE (350 aa). The active-site Nucleophile is the H42. N92, N133, N167, N177, N191, and N267 each carry an N-linked (GlcNAc...) asparagine glycan. 3 disulfides stabilise this stretch: C159/C370, C212/C310, and C345/C349. D287 (proton donor) is an active-site residue. N322 and N331 each carry an N-linked (GlcNAc...) asparagine glycan. Residues 381–401 form a helical membrane-spanning segment; that stretch reads VIVALAVCGSILFLLIVLLLT. Residues 402-423 are Cytoplasmic-facing; that stretch reads VLFRMQAQPPGYRHVADGEDHA.

This sequence belongs to the histidine acid phosphatase family. Post-translationally, the membrane-bound form is converted to the soluble form by sequential proteolytic processing. First, the C-terminal cytoplasmic tail is removed. Cleavage by a lysosomal protease releases the soluble form in the lysosome lumen.

The protein localises to the lysosome membrane. It is found in the lysosome lumen. The enzyme catalyses a phosphate monoester + H2O = an alcohol + phosphate. This Pongo abelii (Sumatran orangutan) protein is Lysosomal acid phosphatase (ACP2).